The primary structure comprises 377 residues: DNA replication and repair protein RecF (377 aa).

Gly30–Thr37 is an ATP binding site.

It belongs to the RecF family.

The protein localises to the cytoplasm. Functionally, the RecF protein is involved in DNA metabolism; it is required for DNA replication and normal SOS inducibility. RecF binds preferentially to single-stranded, linear DNA. It also seems to bind ATP. The polypeptide is DNA replication and repair protein RecF (Thermobifida fusca (strain YX)).